An 84-amino-acid polypeptide reads, in one-letter code: Turripeptide IX-01 (84 aa).

Positions 1–21 (MGFYMLLTVALLLTSFMSVEA) are cleaved as a signal peptide. A propeptide spanning residues 22–39 (TPVDQAERSAMKESGLAH) is cleaved from the precursor. 3 disulfide bridges follow: Cys48–Cys70, Cys55–Cys74, and Cys60–Cys81.

As to expression, expressed by the venom duct.

The protein localises to the secreted. This chain is Turripeptide IX-01, found in Gemmula speciosa (Splendid gem-turris).